The primary structure comprises 348 residues: Holliday junction branch migration complex subunit RuvB (348 aa).

Residues 1–10 (MAIVSSSSGR) are compositionally biased toward low complexity. Residues 1–37 (MAIVSSSSGRKPPRRPEALMDPQQAPEEVVSRPEDKL) form a disordered region. Residues 13–198 (PRRPEALMDP…FGLIQRLEFY (186 aa)) form a large ATPase domain (RuvB-L) region. Residues Leu-37, Arg-38, Gly-79, Lys-82, Thr-83, Thr-84, Arg-188, Tyr-198, and Arg-235 each contribute to the ATP site. Residue Thr-83 participates in Mg(2+) binding. A small ATPAse domain (RuvB-S) region spans residues 199–271 (GQGDLEAIVE…LVGEALSLHR (73 aa)). A head domain (RuvB-H) region spans residues 274–348 (HRGLDASDRR…AARSHLAEAA (75 aa)). DNA-binding residues include Arg-329 and Arg-334.

Belongs to the RuvB family. As to quaternary structure, homohexamer. Forms an RuvA(8)-RuvB(12)-Holliday junction (HJ) complex. HJ DNA is sandwiched between 2 RuvA tetramers; dsDNA enters through RuvA and exits via RuvB. An RuvB hexamer assembles on each DNA strand where it exits the tetramer. Each RuvB hexamer is contacted by two RuvA subunits (via domain III) on 2 adjacent RuvB subunits; this complex drives branch migration. In the full resolvosome a probable DNA-RuvA(4)-RuvB(12)-RuvC(2) complex forms which resolves the HJ.

Its subcellular location is the cytoplasm. The enzyme catalyses ATP + H2O = ADP + phosphate + H(+). The RuvA-RuvB-RuvC complex processes Holliday junction (HJ) DNA during genetic recombination and DNA repair, while the RuvA-RuvB complex plays an important role in the rescue of blocked DNA replication forks via replication fork reversal (RFR). RuvA specifically binds to HJ cruciform DNA, conferring on it an open structure. The RuvB hexamer acts as an ATP-dependent pump, pulling dsDNA into and through the RuvAB complex. RuvB forms 2 homohexamers on either side of HJ DNA bound by 1 or 2 RuvA tetramers; 4 subunits per hexamer contact DNA at a time. Coordinated motions by a converter formed by DNA-disengaged RuvB subunits stimulates ATP hydrolysis and nucleotide exchange. Immobilization of the converter enables RuvB to convert the ATP-contained energy into a lever motion, pulling 2 nucleotides of DNA out of the RuvA tetramer per ATP hydrolyzed, thus driving DNA branch migration. The RuvB motors rotate together with the DNA substrate, which together with the progressing nucleotide cycle form the mechanistic basis for DNA recombination by continuous HJ branch migration. Branch migration allows RuvC to scan DNA until it finds its consensus sequence, where it cleaves and resolves cruciform DNA. This Synechococcus sp. (strain CC9605) protein is Holliday junction branch migration complex subunit RuvB.